We begin with the raw amino-acid sequence, 296 residues long: MQDRFIRSITQLPTPLADALIPLLHQNFAGHIDAQQLAELVQSSQMTEAEVLLALLPIAAALAKPPISEFYVGAIAKGKSGDIYMGANLELPGEALFHSVHAEQSAISHAWLSGESQIVDMIVNASPCGHCRQFMNELVEGGQIKIHLPSQDSHLLSYYLPYAFGPKDLNVQSPLLVKHETEFALDSSDPMVIEALDHAGLSYAPYTQSYAAVVLETADGATYCGRYAENAAFNPSMLPMQMALSNLTRHNRDFGEIRRAVLVESSQGKISLVGATMDALHPVAAIELEHIVVDPV.

CMP/dCMP-type deaminase domains follow at residues 47 to 167 and 186 to 296; these read TEAE…FGPK and DSSD…VDPV. 88–90 contacts substrate; sequence NLE. Residue His-101 coordinates Zn(2+). Glu-103 functions as the Proton donor in the catalytic mechanism. 2 residues coordinate Zn(2+): Cys-128 and Cys-131.

The protein belongs to the cytidine and deoxycytidylate deaminase family. In terms of assembly, homodimer. It depends on Zn(2+) as a cofactor.

The catalysed reaction is cytidine + H2O + H(+) = uridine + NH4(+). It carries out the reaction 2'-deoxycytidine + H2O + H(+) = 2'-deoxyuridine + NH4(+). This enzyme scavenges exogenous and endogenous cytidine and 2'-deoxycytidine for UMP synthesis. The protein is Cytidine deaminase of Shewanella sp. (strain MR-7).